We begin with the raw amino-acid sequence, 88 residues long: UPF0297 protein LAR_0520 (88 aa).

The protein belongs to the UPF0297 family.

In Limosilactobacillus reuteri subsp. reuteri (strain JCM 1112) (Lactobacillus reuteri), this protein is UPF0297 protein LAR_0520.